Reading from the N-terminus, the 561-residue chain is Formate--tetrahydrofolate ligase (561 aa).

ATP is bound at residue 70-77; sequence TPAGEGKT.

This sequence belongs to the formate--tetrahydrofolate ligase family.

The catalysed reaction is (6S)-5,6,7,8-tetrahydrofolate + formate + ATP = (6R)-10-formyltetrahydrofolate + ADP + phosphate. It functions in the pathway one-carbon metabolism; tetrahydrofolate interconversion. This chain is Formate--tetrahydrofolate ligase, found in Pelagibacter ubique (strain HTCC1062).